The following is a 41-amino-acid chain: Large ribosomal subunit protein bL36 (41 aa).

The protein belongs to the bacterial ribosomal protein bL36 family.

The chain is Large ribosomal subunit protein bL36 from Rhodopseudomonas palustris (strain BisB18).